The sequence spans 90 residues: Co-chaperonin GroES (90 aa).

It belongs to the GroES chaperonin family. Heptamer of 7 subunits arranged in a ring. Interacts with the chaperonin GroEL.

The protein resides in the cytoplasm. Together with the chaperonin GroEL, plays an essential role in assisting protein folding. The GroEL-GroES system forms a nano-cage that allows encapsulation of the non-native substrate proteins and provides a physical environment optimized to promote and accelerate protein folding. GroES binds to the apical surface of the GroEL ring, thereby capping the opening of the GroEL channel. The protein is Co-chaperonin GroES of Thermosipho africanus (strain TCF52B).